An 856-amino-acid polypeptide reads, in one-letter code: Putative zinc protease C28F5.4 (856 aa).

Zn(2+) is bound at residue histidine 71. Glutamate 74 functions as the Proton acceptor in the catalytic mechanism. Histidine 75 and glutamate 152 together coordinate Zn(2+).

The protein belongs to the peptidase M16 family.

This chain is Putative zinc protease C28F5.4, found in Caenorhabditis elegans.